The primary structure comprises 359 residues: DNA integrity scanning protein DisA (359 aa).

In terms of domain architecture, DAC spans 7–145 (DPTGRAVLRA…DGRRWVLEDS (139 aa)). ATP is bound by residues Gly74, Leu92, and 105 to 109 (TRHRT).

This sequence belongs to the DisA family. In terms of assembly, homooctamer. Mg(2+) is required as a cofactor.

It carries out the reaction 2 ATP = 3',3'-c-di-AMP + 2 diphosphate. Its function is as follows. Participates in a DNA-damage check-point. DisA forms globular foci that rapidly scan along the chromosomes searching for lesions. In terms of biological role, also has diadenylate cyclase activity, catalyzing the condensation of 2 ATP molecules into cyclic di-AMP (c-di-AMP). c-di-AMP likely acts as a signaling molecule that may couple DNA integrity with a cellular process. The chain is DNA integrity scanning protein DisA from Beutenbergia cavernae (strain ATCC BAA-8 / DSM 12333 / CCUG 43141 / JCM 11478 / NBRC 16432 / NCIMB 13614 / HKI 0122).